The primary structure comprises 449 residues: Histidinol dehydrogenase (449 aa).

Tyr-136, Gln-204, and Asn-232 together coordinate NAD(+). Substrate is bound by residues Thr-255, Gln-277, and His-280. Zn(2+) contacts are provided by Gln-277 and His-280. Catalysis depends on proton acceptor residues Glu-346 and His-347. Substrate is bound by residues His-347, Asp-380, Glu-434, and His-439. Asp-380 contributes to the Zn(2+) binding site. His-439 contacts Zn(2+).

It belongs to the histidinol dehydrogenase family. Zn(2+) is required as a cofactor.

The enzyme catalyses L-histidinol + 2 NAD(+) + H2O = L-histidine + 2 NADH + 3 H(+). It functions in the pathway amino-acid biosynthesis; L-histidine biosynthesis; L-histidine from 5-phospho-alpha-D-ribose 1-diphosphate: step 9/9. Functionally, catalyzes the sequential NAD-dependent oxidations of L-histidinol to L-histidinaldehyde and then to L-histidine. The protein is Histidinol dehydrogenase (hisD) of Mycobacterium leprae (strain TN).